A 368-amino-acid chain; its full sequence is Protein-glutamate methylesterase/protein-glutamine glutaminase (368 aa).

The Response regulatory domain maps to 9 to 126 (KVLVVDDSAF…SINMKELKDE (118 aa)). D60 carries the 4-aspartylphosphate modification. In terms of domain architecture, CheB-type methylesterase spans 161–354 (SVPARIAVAI…ETVVKAVEII (194 aa)). Residues S173, H200, and D296 contribute to the active site.

This sequence belongs to the CheB family. Post-translationally, phosphorylated by CheA. Phosphorylation of the N-terminal regulatory domain activates the methylesterase activity.

The protein localises to the cytoplasm. It carries out the reaction [protein]-L-glutamate 5-O-methyl ester + H2O = L-glutamyl-[protein] + methanol + H(+). The catalysed reaction is L-glutaminyl-[protein] + H2O = L-glutamyl-[protein] + NH4(+). Involved in chemotaxis. Part of a chemotaxis signal transduction system that modulates chemotaxis in response to various stimuli. Catalyzes the demethylation of specific methylglutamate residues introduced into the chemoreceptors (methyl-accepting chemotaxis proteins or MCP) by CheR. Also mediates the irreversible deamidation of specific glutamine residues to glutamic acid. This chain is Protein-glutamate methylesterase/protein-glutamine glutaminase, found in Pyrococcus horikoshii (strain ATCC 700860 / DSM 12428 / JCM 9974 / NBRC 100139 / OT-3).